We begin with the raw amino-acid sequence, 173 residues long: CKLF-like MARVEL transmembrane domain-containing protein 8 (173 aa).

The 133-residue stretch at F36–R168 folds into the MARVEL domain. 4 helical membrane-spanning segments follow: residues L40–A60, F70–I90, T105–V125, and F147–W167.

The protein belongs to the chemokine-like factor family. Highly expressed in liver and pancreas.

Its subcellular location is the membrane. It is found in the cytoplasm. It localises to the nucleus. The polypeptide is CKLF-like MARVEL transmembrane domain-containing protein 8 (CMTM8) (Homo sapiens (Human)).